The chain runs to 639 residues: DNA gyrase subunit B (639 aa).

Residues 392-402 show a composition bias toward basic and acidic residues; that stretch reads QAEELTRRKSA. The interval 392 to 416 is disordered; it reads QAEELTRRKSALESTSLPGKLADCQ. Residues 423–537 form the Toprim domain; sequence SELFIVEGDS…AGYVYAAQPP (115 aa). Mg(2+) is bound by residues glutamate 429, aspartate 502, and aspartate 504. Lysine 624 participates in a covalent cross-link: Glycyl lysine isopeptide (Lys-Gly) (interchain with G-Cter in SAMP2).

Belongs to the type II topoisomerase GyrB family. Heterotetramer, composed of two GyrA and two GyrB chains. In the heterotetramer, GyrA contains the active site tyrosine that forms a transient covalent intermediate with DNA, while GyrB binds cofactors and catalyzes ATP hydrolysis. Mg(2+) serves as cofactor. The cofactor is Mn(2+). Ca(2+) is required as a cofactor.

It is found in the cytoplasm. It carries out the reaction ATP-dependent breakage, passage and rejoining of double-stranded DNA.. Functionally, a type II topoisomerase that negatively supercoils closed circular double-stranded (ds) DNA in an ATP-dependent manner to modulate DNA topology and maintain chromosomes in an underwound state. Negative supercoiling favors strand separation, and DNA replication, transcription, recombination and repair, all of which involve strand separation. Also able to catalyze the interconversion of other topological isomers of dsDNA rings, including catenanes and knotted rings. Type II topoisomerases break and join 2 DNA strands simultaneously in an ATP-dependent manner. The sequence is that of DNA gyrase subunit B from Haloferax volcanii (strain ATCC 29605 / DSM 3757 / JCM 8879 / NBRC 14742 / NCIMB 2012 / VKM B-1768 / DS2) (Halobacterium volcanii).